A 421-amino-acid chain; its full sequence is Probable sugar-binding periplasmic protein (421 aa).

Positions 1 to 27 are cleaved as a signal peptide; sequence MHKLLKLAAMGTAACALLAGMAPVANA.

It belongs to the bacterial solute-binding protein 1 family.

It is found in the periplasm. In terms of biological role, part of a binding-protein-dependent transport system for a sugar. The protein is Probable sugar-binding periplasmic protein of Brucella suis biovar 1 (strain 1330).